The following is a 922-amino-acid chain: Coronin-7 (922 aa).

4 WD repeats span residues 75–115 (CHSD…EALP), 124–163 (PEEL…PLTE), 166–205 (AHKD…QASQ), and 209–253 (AHEN…SALA). Residues 419–467 (DTDLSEGFSSPSSLMSPSTPSSLGPSLSSTSGIGTSPSQRSLQSLLGPS) form a disordered region. The segment covering 427 to 456 (SSPSSLMSPSTPSSLGPSLSSTSGIGTSPS) has biased composition (low complexity). Ser-459 and Ser-462 each carry phosphoserine. A Glycyl lysine isopeptide (Lys-Gly) (interchain with G-Cter in ubiquitin) cross-link involves residue Lys-469. WD repeat units follow at residues 539–581 (QNGT…NVLT), 589–629 (GHTE…ERLK), 632–671 (GHQD…LPLQ), and 725–765 (DVAP…PFFL). Residues 858–922 (GMTPVSQAPR…FEGVDEDEWD (65 aa)) are disordered. A compositionally biased stretch (basic and acidic residues) spans 881-893 (LEEKSDQQKKEEL). Ser-912 bears the Phosphoserine mark.

Belongs to the WD repeat coronin family. As to quaternary structure, interacts with clathrin adapter AP1 complex. This interaction takes place at Golgi membranes and not AP1-positive endosomal membranes. Interacts (when ubiquitinated at Lys-469) with EPS15. The membrane-associated form is phosphorylated on tyrosine residues. Post-translationally, ubiquitinated via 'Lys-33'-linked ubiquitin chains by the BCR(KLHL20) E3 ubiquitin ligase complex: 'Lys-33'-linked ubiquitination promotes interaction with EPS15 and facilitates actin polymerization at the trans-Golgi network, thereby facilitating post-Golgi trafficking. Deubiquitinated by ZRANB1/TRABID. In the adult, widely expressed with highest levels in brain, thymus and kidney and low levels in skeletal and heart muscle. Not expressed in lung. In the eye, strongly expressed in the outer plexiform layer of the retina. In the intestine, expressed both in terminally differentiated epithelial cells and in crypt epithelium. In the embryo, strongest expression is seen in brain, thymus, intestine, apical epidermal layers of the skin and developing lens fibers of the eye.

It is found in the golgi apparatus membrane. The protein resides in the golgi apparatus. The protein localises to the trans-Golgi network. It localises to the cytoplasmic vesicle. Its subcellular location is the cytoplasm. It is found in the cytosol. In terms of biological role, F-actin regulator involved in anterograde Golgi to endosome transport: upon ubiquitination via 'Lys-33'-linked ubiquitin chains by the BCR(KLHL20) E3 ubiquitin ligase complex, interacts with EPS15 and localizes to the trans-Golgi network, where it promotes actin polymerization, thereby facilitating post-Golgi trafficking. May play a role in the maintenance of the Golgi apparatus morphology. This is Coronin-7 (Coro7) from Mus musculus (Mouse).